A 991-amino-acid chain; its full sequence is uncharacterized protein (991 aa).

A signal peptide spans 1-17; that stretch reads MLWPAALVAMFALAARA. Disordered stretches follow at residues 332-352, 392-425, 469-511, 542-569, 587-641, and 658-734; these read DPLP…GETT, TTED…TTEG, EDST…EDTT, DTEA…TTPV, PAPT…NSLS, and ASSG…PPRI. Over residues 400–413 the composition is skewed to low complexity; sequence TSTPTVTTVIDPTS. Over residues 414-425 the composition is skewed to polar residues; that stretch reads GAVTTESRTTEG. Over residues 472 to 493 the composition is skewed to low complexity; the sequence is TTTARAAEYPTPTTTTVEPRPA. Residues 542-554 are compositionally biased toward polar residues; that stretch reads DTEAAQSATSISD. 2 stretches are compositionally biased toward low complexity: residues 556–569 and 598–615; these read VTPE…TTPV and ASTT…SHTP. Composition is skewed to polar residues over residues 617–628 and 658–667; these read PQESTSTPSRAP and ASSGPGASTG. Over residues 668-682 the composition is skewed to low complexity; it reads ATTAPISPPWSASPA. Residues 686–710 show a composition bias toward polar residues; the sequence is VTTSAARTLEPSSTRKAVAAESTTA.

This is an uncharacterized protein from Psittacid herpesvirus 1 (isolate Amazon parrot/-/97-0001/1997) (PsHV-1).